A 64-amino-acid polypeptide reads, in one-letter code: MKLTCVMIVAVLVLTVCKVVTSDQLKKLRRECYLEPGDSCFHDDGRGACCEGTCFFGVACVPWS.

The N-terminal stretch at 1-22 (MKLTCVMIVAVLVLTVCKVVTS) is a signal peptide. Intrachain disulfides connect C32–C50, C40–C54, and C49–C60.

Expressed by the venom duct.

It localises to the secreted. Probable neurotoxin. The protein is Conotoxin Cal6.24 of Californiconus californicus (California cone).